The chain runs to 121 residues: MNLIQQLEQEEIARLNKEIPEFAPGDTVVVSVRVVEGTRSRLQAYEGVVIARRNRGLNSNFIVRKISSGEGVERTFQLYSPTVEKIEVKRRGDVRRAKLYYLRGLTGKAARIKEKLPARKG.

Belongs to the bacterial ribosomal protein bL19 family.

Functionally, this protein is located at the 30S-50S ribosomal subunit interface and may play a role in the structure and function of the aminoacyl-tRNA binding site. The protein is Large ribosomal subunit protein bL19 of Neisseria gonorrhoeae (strain ATCC 700825 / FA 1090).